Consider the following 291-residue polypeptide: Mitochondrial fission factor (291 aa).

The Cytoplasmic portion of the chain corresponds to 1–271; that stretch reads MAEISRIQYE…ENKERAKREM (271 aa). Thr89 carries the post-translational modification Phosphothreonine. A disordered region spans residues 106–134; sequence LERPLPTPQSEESRAVGRLKRERSMSENA. Residues Ser129, Ser131, and Ser146 each carry the phosphoserine modification. The residue at position 149 (Thr149) is a Phosphothreonine. Residues Ser151, Ser178, Ser182, and Ser244 each carry the phosphoserine modification. Positions 240–271 form a coiled coil; that stretch reads VDAASLRRQIIKLNRRLQLLEEENKERAKREM. A helical; Anchor for type IV membrane protein transmembrane segment spans residues 272-289; the sequence is VMYSITVAFWLLNSWLWF. At 290-291 the chain is on the mitochondrial intermembrane side; that stretch reads RR.

It belongs to the Tango11 family. In terms of assembly, homodimer. Interacts with DNM1L. Interacts with C11orf65/MFI; the interaction inhibits MFF interaction with DNM1L.

It is found in the mitochondrion outer membrane. The protein resides in the peroxisome. Its subcellular location is the cytoplasmic vesicle. The protein localises to the secretory vesicle. It localises to the synaptic vesicle. In terms of biological role, plays a role in mitochondrial and peroxisomal fission. Promotes the recruitment and association of the fission mediator dynamin-related protein 1 (DNM1L) to the mitochondrial surface. May be involved in regulation of synaptic vesicle membrane dynamics by recruitment of DNM1L to clathrin-containing vesicles. The chain is Mitochondrial fission factor (Mff) from Mus musculus (Mouse).